A 143-amino-acid chain; its full sequence is Transcriptional regulator MraZ (143 aa).

2 SpoVT-AbrB domains span residues 5 to 47 and 76 to 119; these read EYTH…PLIE and ACEC…DAER.

Belongs to the MraZ family. As to quaternary structure, forms oligomers.

Its subcellular location is the cytoplasm. It localises to the nucleoid. This chain is Transcriptional regulator MraZ, found in Limosilactobacillus fermentum (strain NBRC 3956 / LMG 18251) (Lactobacillus fermentum).